The following is a 564-amino-acid chain: O-fucosyltransferase 5 (564 aa).

The segment at 1–28 is disordered; sequence MVRNSSDEEEDHRNLIPQNDTRDNDLNL. A helical; Signal-anchor for type II membrane protein membrane pass occupies residues 70-90; it reads YVVAAVSLTLFVGLLFLFTDT. N-linked (GlcNAc...) asparagine glycosylation is found at Asn-129, Asn-134, and Asn-174. Residues 413–415 and 529–530 contribute to the substrate site; these read HLR and TF.

The protein belongs to the glycosyltransferase GT106 family.

It localises to the membrane. Its pathway is glycan metabolism. The polypeptide is O-fucosyltransferase 5 (Arabidopsis thaliana (Mouse-ear cress)).